Reading from the N-terminus, the 198-residue chain is Dual specificity protein phosphatase 13B (198 aa).

One can recognise a Tyrosine-protein phosphatase domain in the interval 45 to 193 (HINEVWPNLF…LQVLDNRLRR (149 aa)). The active-site Phosphocysteine intermediate is the Cys-138.

Belongs to the protein-tyrosine phosphatase family. Non-receptor class dual specificity subfamily. As to expression, most abundantly expressed in the testis.

It carries out the reaction O-phospho-L-tyrosyl-[protein] + H2O = L-tyrosyl-[protein] + phosphate. The catalysed reaction is O-phospho-L-seryl-[protein] + H2O = L-seryl-[protein] + phosphate. The enzyme catalyses O-phospho-L-threonyl-[protein] + H2O = L-threonyl-[protein] + phosphate. Functionally, dual specificity phosphatase that dephosphorylates MAPK8/JNK and MAPK14/p38, but not MAPK1/ERK2, in vitro. Exhibits intrinsic phosphatase activity towards both phospho-seryl/threonyl and -tyrosyl residues, with similar specific activities in vitro. The polypeptide is Dual specificity protein phosphatase 13B (Mus musculus (Mouse)).